A 229-amino-acid polypeptide reads, in one-letter code: Synaptogyrin-3 (229 aa).

Residue methionine 1 is modified to N-acetylmethionine. One can recognise an MARVEL domain in the interval 20 to 172 (FARRPQTLLR…LTVKALQRFR (153 aa)). Transmembrane regions (helical) follow at residues 30–50 (VASWVFSIAVFGPIVNEGYVN), 70–90 (FGVALGLGAFLACSCFLLLDV), 105–125 (VLLDLGFSGLWSFLWFVGFCF), and 148–168 (AVITFSFFSILSWVALTVKAL).

It belongs to the synaptogyrin family. As to quaternary structure, interacts (via N-terminus) with SLC6A3 (via N-terminus). May interact with VMAT2.

Its subcellular location is the cytoplasmic vesicle. It is found in the secretory vesicle. The protein localises to the synaptic vesicle membrane. The protein resides in the synapse. In terms of biological role, may play a role in regulated exocytosis. May indirectly regulate the activity of the plasma membrane dopamine transporter SLC6A3 and thereby regulate dopamine transport back from the synaptic cleft into the presynaptic terminal. The polypeptide is Synaptogyrin-3 (Bos taurus (Bovine)).